Reading from the N-terminus, the 245-residue chain is 1-(5-phosphoribosyl)-5-[(5-phosphoribosylamino)methylideneamino] imidazole-4-carboxamide isomerase (245 aa).

Catalysis depends on D7, which acts as the Proton acceptor. D129 serves as the catalytic Proton donor.

Belongs to the HisA/HisF family.

The protein localises to the cytoplasm. The enzyme catalyses 1-(5-phospho-beta-D-ribosyl)-5-[(5-phospho-beta-D-ribosylamino)methylideneamino]imidazole-4-carboxamide = 5-[(5-phospho-1-deoxy-D-ribulos-1-ylimino)methylamino]-1-(5-phospho-beta-D-ribosyl)imidazole-4-carboxamide. Its pathway is amino-acid biosynthesis; L-histidine biosynthesis; L-histidine from 5-phospho-alpha-D-ribose 1-diphosphate: step 4/9. The protein is 1-(5-phosphoribosyl)-5-[(5-phosphoribosylamino)methylideneamino] imidazole-4-carboxamide isomerase of Escherichia coli (strain SMS-3-5 / SECEC).